A 359-amino-acid chain; its full sequence is DNA-directed RNA polymerase subunit alpha (359 aa).

An alpha N-terminal domain (alpha-NTD) region spans residues 1–226; it reads MLISQRPSLA…ELFGLARELN (226 aa). Residues 241 to 359 are alpha C-terminal domain (alpha-CTD); that stretch reads ADTIAAYAMP…GQDYAETEQL (119 aa). The segment at 315-359 is disordered; it reads FDPSAAAAEYPSEGWASETETVGGLGRVEDNGYDDGQDYAETEQL. Residues 345 to 359 show a composition bias toward acidic residues; it reads NGYDDGQDYAETEQL.

Belongs to the RNA polymerase alpha chain family. In terms of assembly, homodimer. The RNAP catalytic core consists of 2 alpha, 1 beta, 1 beta' and 1 omega subunit. When a sigma factor is associated with the core the holoenzyme is formed, which can initiate transcription.

It catalyses the reaction RNA(n) + a ribonucleoside 5'-triphosphate = RNA(n+1) + diphosphate. In terms of biological role, DNA-dependent RNA polymerase catalyzes the transcription of DNA into RNA using the four ribonucleoside triphosphates as substrates. The polypeptide is DNA-directed RNA polymerase subunit alpha (Saccharopolyspora erythraea (strain ATCC 11635 / DSM 40517 / JCM 4748 / NBRC 13426 / NCIMB 8594 / NRRL 2338)).